Reading from the N-terminus, the 410-residue chain is Lissencephaly-1 homolog A (410 aa).

The LisH domain occupies 7–39 (QRDELNRAIADYLRSNGYEEAYSTFKKEAELDM). Residues 56-82 (TSVIRLQKKVMELESKLNEAKEEITLG) are a coiled coil. WD repeat units lie at residues 106–147 (GHRS…RTLK), 148–187 (GHTDSVQDISFDHTGKLLASCSADMTIKLWDFQGFECIRT), 190–229 (GHDHNVSSVAIMPNGDHIVSASRDKTIKMWEVATGYCVKT), 232–271 (GHREWVRMVRPNQDGTLIASCSNDQTVRVWVVASKECKAE), 274–333 (EHEH…CLMT), 336–375 (GHDNWVRGMLVHPGGKFILSCADDKTLRIWDYKNKRCMKT), and 378–410 (AHEHFVTSLDFHKNAPYVVTGSVDQTVKVWECR).

It belongs to the WD repeat LIS1/nudF family. In terms of assembly, can self-associate. Component of the cytosolic PAF-AH (I) heterotetrameric enzyme, which is composed of PAFAH1B1 (beta), PAFAH1B2 (alpha2) and PAFAH1B3 (alpha1) subunits. The catalytic activity of the enzyme resides in the alpha1 (PAFAH1B3) and alpha2 (PAFAH1B2) subunits, whereas the beta subunit (PAFAH1B1) has regulatory activity. Trimer formation is not essential for the catalytic activity. Interacts with dynein, dynactin, nde1 and ndel1.

It is found in the cytoplasm. The protein localises to the cytoskeleton. It localises to the microtubule organizing center. The protein resides in the centrosome. Regulatory subunit (beta subunit) of the cytosolic type I platelet-activating factor (PAF) acetylhydrolase (PAF-AH (I)), an enzyme that catalyzes the hydrolyze of the acetyl group at the sn-2 position of PAF and its analogs and participates in PAF inactivation. Regulates the PAF-AH (I) activity in a catalytic dimer composition-dependent manner. Positively regulates the activity of the minus-end directed microtubule motor protein dynein. May enhance dynein-mediated microtubule sliding by targeting dynein to the microtubule plus end. Required for several dynein- and microtubule-dependent processes such as the maintenance of Golgi integrity, the peripheral transport of microtubule fragments and the coupling of the nucleus and centrosome. May be required for proliferation of neuronal precursors and neuronal migration. The polypeptide is Lissencephaly-1 homolog A (pafah1b1-1) (Salmo salar (Atlantic salmon)).